The primary structure comprises 254 residues: MTSVPTVSDSKRAFYAAYPRPINPLYRRVVEELLVEIHLLSVNTSFVYDPLFALGVVTAFDSFMSSYRPIEAVGPLFTALTQAVRQNPEQYRHDANAIAEQVRGVGSDTIRQWLTEAEALGNAPELVRSSFQAIAGRSEFKYSRLFAIGLFSLLETAAPDLVQDPEALKTTVTAIAERFHLPSDKLQKDLDLYRSNLEKMEQARITMEEAIQADRRKREQREQEKLAKAAAAEAPAALEASSDNPEPETSETPS.

The stretch at 183 to 217 forms a coiled coil; sequence SDKLQKDLDLYRSNLEKMEQARITMEEAIQADRRK. The span at 213 to 227 shows a compositional bias: basic and acidic residues; that stretch reads ADRRKREQREQEKLA. Residues 213–254 form a disordered region; that stretch reads ADRRKREQREQEKLAKAAAAEAPAALEASSDNPEPETSETPS. A compositionally biased stretch (low complexity) spans 228–240; that stretch reads KAAAAEAPAALEA. The span at 245-254 shows a compositional bias: acidic residues; that stretch reads PEPETSETPS.

Belongs to the THF1 family.

May be involved in photosynthetic membrane biogenesis. The polypeptide is Protein Thf1 (Synechococcus elongatus (strain ATCC 33912 / PCC 7942 / FACHB-805) (Anacystis nidulans R2)).